A 125-amino-acid polypeptide reads, in one-letter code: Glycine cleavage system H protein (125 aa).

Positions 22–104 (SYVIGITDFA…YDTGWILKLE (83 aa)) constitute a Lipoyl-binding domain. K63 carries the post-translational modification N6-lipoyllysine.

Belongs to the GcvH family. The glycine cleavage system is composed of four proteins: P, T, L and H. It depends on (R)-lipoate as a cofactor.

In terms of biological role, the glycine cleavage system catalyzes the degradation of glycine. The H protein shuttles the methylamine group of glycine from the P protein to the T protein. Functionally, is also involved in protein lipoylation via its role as an octanoyl/lipoyl carrier protein intermediate. The polypeptide is Glycine cleavage system H protein (Listeria monocytogenes serotype 4b (strain CLIP80459)).